A 195-amino-acid polypeptide reads, in one-letter code: Ribonuclease HII (195 aa).

The 190-residue stretch at 6–195 (SLIAGVDEVG…KSFISRLEIN (190 aa)) folds into the RNase H type-2 domain. Residues Asp12, Glu13, and Asp108 each contribute to the a divalent metal cation site.

This sequence belongs to the RNase HII family. Mn(2+) serves as cofactor. Mg(2+) is required as a cofactor.

The protein resides in the cytoplasm. It catalyses the reaction Endonucleolytic cleavage to 5'-phosphomonoester.. Endonuclease that specifically degrades the RNA of RNA-DNA hybrids. This Prochlorococcus marinus (strain NATL1A) protein is Ribonuclease HII.